We begin with the raw amino-acid sequence, 594 residues long: Adenine deaminase 1 (594 aa).

The protein belongs to the metallo-dependent hydrolases superfamily. Adenine deaminase family. Mn(2+) is required as a cofactor.

The enzyme catalyses adenine + H2O + H(+) = hypoxanthine + NH4(+). The polypeptide is Adenine deaminase 1 (Latilactobacillus sakei subsp. sakei (strain 23K) (Lactobacillus sakei subsp. sakei)).